A 135-amino-acid chain; its full sequence is Basic phospholipase A2 KBf-VA (135 aa).

Cystine bridges form between cysteine 28/cysteine 87, cysteine 42/cysteine 134, cysteine 44/cysteine 60, cysteine 59/cysteine 115, cysteine 66/cysteine 108, cysteine 76/cysteine 101, and cysteine 94/cysteine 106. Ca(2+) contacts are provided by tyrosine 43, glycine 45, and glycine 47. Histidine 63 is an active-site residue. Aspartate 64 lines the Ca(2+) pocket. Aspartate 109 is a catalytic residue.

Belongs to the phospholipase A2 family. Group I subfamily. D49 sub-subfamily. The cofactor is Ca(2+). In terms of tissue distribution, expressed by the venom gland.

The protein localises to the secreted. It catalyses the reaction a 1,2-diacyl-sn-glycero-3-phosphocholine + H2O = a 1-acyl-sn-glycero-3-phosphocholine + a fatty acid + H(+). Functionally, snake venom phospholipase A2 (PLA2) that inhibits neuromuscular transmission by blocking acetylcholine release from the nerve termini. PLA2 catalyzes the calcium-dependent hydrolysis of the 2-acyl groups in 3-sn-phosphoglycerides. This chain is Basic phospholipase A2 KBf-VA, found in Bungarus fasciatus (Banded krait).